Reading from the N-terminus, the 274-residue chain is Small ribosomal subunit protein uS2 (274 aa).

The tract at residues Ala-255 to Glu-274 is disordered.

It belongs to the universal ribosomal protein uS2 family.

This is Small ribosomal subunit protein uS2 from Gloeobacter violaceus (strain ATCC 29082 / PCC 7421).